We begin with the raw amino-acid sequence, 150 residues long: Large ribosomal subunit protein bL9 (150 aa).

It belongs to the bacterial ribosomal protein bL9 family.

In terms of biological role, binds to the 23S rRNA. This Polaromonas naphthalenivorans (strain CJ2) protein is Large ribosomal subunit protein bL9.